Consider the following 337-residue polypeptide: Inositol 2-dehydrogenase (337 aa).

It belongs to the Gfo/Idh/MocA family. As to quaternary structure, homotetramer.

It carries out the reaction myo-inositol + NAD(+) = scyllo-inosose + NADH + H(+). Functionally, involved in the oxidation of myo-inositol (MI) to 2-keto-myo-inositol (2KMI or 2-inosose). This Corynebacterium glutamicum (strain ATCC 13032 / DSM 20300 / JCM 1318 / BCRC 11384 / CCUG 27702 / LMG 3730 / NBRC 12168 / NCIMB 10025 / NRRL B-2784 / 534) protein is Inositol 2-dehydrogenase.